Reading from the N-terminus, the 239-residue chain is Dihydromethanopterin reductase (acceptor) (239 aa).

4Fe-4S ferredoxin-type domains follow at residues 144 to 175 (MPYNIDRKQCKHCETCPPRENCPHEAISEKNG) and 176 to 205 (VTDQIDLLKCKGCGICKELCPYNAIKGGPV). Cys-153, Cys-156, Cys-159, Cys-165, Cys-185, Cys-188, Cys-191, and Cys-195 together coordinate [4Fe-4S] cluster.

Homodimer. [4Fe-4S] cluster serves as cofactor.

The enzyme catalyses 5,6,7,8-tetrahydromethanopterin + A = 7,8-dihydromethanopterin + AH2. It functions in the pathway cofactor biosynthesis; 5,6,7,8-tetrahydromethanopterin biosynthesis. Involved in the biosynthesis of tetrahydromethanopterin, a coenzyme used in methanogenesis. Catalyzes the reduction of dihydromethanopterin (H(2)MPT) to tetrahydromethanopterin (H(4)MPT). Ferredoxin may serve as an electron donor. The sequence is that of Dihydromethanopterin reductase (acceptor) from Methanosarcina mazei (strain ATCC BAA-159 / DSM 3647 / Goe1 / Go1 / JCM 11833 / OCM 88) (Methanosarcina frisia).